A 136-amino-acid polypeptide reads, in one-letter code: Large ribosomal subunit protein bL17 (136 aa).

This sequence belongs to the bacterial ribosomal protein bL17 family. As to quaternary structure, part of the 50S ribosomal subunit. Contacts protein L32.

This chain is Large ribosomal subunit protein bL17, found in Rickettsia prowazekii (strain Madrid E).